The chain runs to 203 residues: LexA repressor (203 aa).

Residues 28-47 (IREIGDEFGITAKGAYDHLK) constitute a DNA-binding region (H-T-H motif). Residues S127 and K164 each act as for autocatalytic cleavage activity in the active site.

This sequence belongs to the peptidase S24 family. As to quaternary structure, homodimer.

The enzyme catalyses Hydrolysis of Ala-|-Gly bond in repressor LexA.. In terms of biological role, represses a number of genes involved in the response to DNA damage (SOS response), including recA and lexA. In the presence of single-stranded DNA, RecA interacts with LexA causing an autocatalytic cleavage which disrupts the DNA-binding part of LexA, leading to derepression of the SOS regulon and eventually DNA repair. This Leptospira interrogans serogroup Icterohaemorrhagiae serovar copenhageni (strain Fiocruz L1-130) protein is LexA repressor.